Reading from the N-terminus, the 158-residue chain is Cyclic pyranopterin monophosphate synthase (158 aa).

Substrate contacts are provided by residues 75-77 (LCH) and 113-114 (ME). Asp128 is a catalytic residue.

It belongs to the MoaC family. Homohexamer; trimer of dimers.

It catalyses the reaction (8S)-3',8-cyclo-7,8-dihydroguanosine 5'-triphosphate = cyclic pyranopterin phosphate + diphosphate. The protein operates within cofactor biosynthesis; molybdopterin biosynthesis. Catalyzes the conversion of (8S)-3',8-cyclo-7,8-dihydroguanosine 5'-triphosphate to cyclic pyranopterin monophosphate (cPMP). The chain is Cyclic pyranopterin monophosphate synthase from Dinoroseobacter shibae (strain DSM 16493 / NCIMB 14021 / DFL 12).